The primary structure comprises 300 residues: Protein YIF1B (300 aa).

The interval 1 to 46 (MNQESSFRAPPKRRVRGPNPNISTPHQLFDDTSGGPVPHGGEYPNH) is disordered. The Cytoplasmic portion of the chain corresponds to 1–142 (MNQESSFRAP…APRFDINAPD (142 aa)). The chain crosses the membrane as a helical span at residues 143–163 (LYIPVMAFITYILVAGLALGT). At 164–178 (QSRFSPEILGMQASS) the chain is on the extracellular side. A helical membrane pass occupies residues 179-199 (ALAWLIVEVLAILLSLYLVTV). Over 200–205 (NTDLTT) the chain is Cytoplasmic. The chain crosses the membrane as a helical span at residues 206–226 (VDLVAFSGYKYVGMISGVISG). Position 227 (Leu227) is a topological domain, extracellular. Residues 228–248 (LFGKTGYYVVLSWCGISVVFF) traverse the membrane as a helical segment. The Cytoplasmic portion of the chain corresponds to 249–278 (MIRTLRLKILSEAAAEGVLVRGARNQLRMY). A helical membrane pass occupies residues 279–299 (LTMAIAAVQPIFMYWLTYHLV). Arg300 is a topological domain (extracellular).

Belongs to the YIF1 family.

It localises to the endoplasmic reticulum membrane. Its subcellular location is the golgi apparatus membrane. The protein localises to the endoplasmic reticulum-Golgi intermediate compartment membrane. Its function is as follows. Functions in endoplasmic reticulum to Golgi vesicle-mediated transport and regulates the proper organization of the endoplasmic reticulum and the Golgi. Plays a key role in targeting to neuronal dendrites receptors such as HTR1A. Plays also a role in primary cilium and sperm flagellum assembly probably through protein transport to these compartments. In Xenopus tropicalis (Western clawed frog), this protein is Protein YIF1B (yif1b).